The chain runs to 630 residues: tRNA uridine 5-carboxymethylaminomethyl modification enzyme MnmG (630 aa).

13-18 contacts FAD; that stretch reads GGGHAG. Residue 273-287 participates in NAD(+) binding; sequence GPRYCPSIEDKIHRF.

It belongs to the MnmG family. In terms of assembly, homodimer. Heterotetramer of two MnmE and two MnmG subunits. The cofactor is FAD.

The protein resides in the cytoplasm. NAD-binding protein involved in the addition of a carboxymethylaminomethyl (cmnm) group at the wobble position (U34) of certain tRNAs, forming tRNA-cmnm(5)s(2)U34. This Pseudomonas aeruginosa (strain LESB58) protein is tRNA uridine 5-carboxymethylaminomethyl modification enzyme MnmG.